A 360-amino-acid polypeptide reads, in one-letter code: Phospho-N-acetylmuramoyl-pentapeptide-transferase (360 aa).

10 helical membrane-spanning segments follow: residues 21–41, 73–93, 94–114, 132–152, 168–188, 199–219, 239–259, 263–283, 288–308, and 338–358; these read YITVRANLALLTALFISLWIG, TMGGVMILFSIGVSTLLWANL, ANPYIWVCLFVLFGYGAIGFV, WKYFWMSVVALVAILWLYWLG, IMPQLGLFYIVLSYFVIVGTG, GLAIMPTALVAGAFALIAWAT, VVVFCTAIVGASLGFLWFNTY, VFMGDVGSLALGGALGVVAIL, FLLVIMGGVFVVEALSVILQV, and VIIRFWIISLMLVLMGLVTLK.

It belongs to the glycosyltransferase 4 family. MraY subfamily. Mg(2+) is required as a cofactor.

It localises to the cell inner membrane. The catalysed reaction is UDP-N-acetyl-alpha-D-muramoyl-L-alanyl-gamma-D-glutamyl-meso-2,6-diaminopimeloyl-D-alanyl-D-alanine + di-trans,octa-cis-undecaprenyl phosphate = di-trans,octa-cis-undecaprenyl diphospho-N-acetyl-alpha-D-muramoyl-L-alanyl-D-glutamyl-meso-2,6-diaminopimeloyl-D-alanyl-D-alanine + UMP. It functions in the pathway cell wall biogenesis; peptidoglycan biosynthesis. Catalyzes the initial step of the lipid cycle reactions in the biosynthesis of the cell wall peptidoglycan: transfers peptidoglycan precursor phospho-MurNAc-pentapeptide from UDP-MurNAc-pentapeptide onto the lipid carrier undecaprenyl phosphate, yielding undecaprenyl-pyrophosphoryl-MurNAc-pentapeptide, known as lipid I. This Haemophilus influenzae (strain ATCC 51907 / DSM 11121 / KW20 / Rd) protein is Phospho-N-acetylmuramoyl-pentapeptide-transferase.